Here is a 308-residue protein sequence, read N- to C-terminus: Ribosomal RNA small subunit methyltransferase H (308 aa).

S-adenosyl-L-methionine-binding positions include 36–38 (GGH), aspartate 55, phenylalanine 82, aspartate 103, and glutamine 110.

It belongs to the methyltransferase superfamily. RsmH family.

The protein localises to the cytoplasm. It catalyses the reaction cytidine(1402) in 16S rRNA + S-adenosyl-L-methionine = N(4)-methylcytidine(1402) in 16S rRNA + S-adenosyl-L-homocysteine + H(+). Functionally, specifically methylates the N4 position of cytidine in position 1402 (C1402) of 16S rRNA. The protein is Ribosomal RNA small subunit methyltransferase H of Helicobacter pylori (strain ATCC 700392 / 26695) (Campylobacter pylori).